Reading from the N-terminus, the 130-residue chain is Holo-[acyl-carrier-protein] synthase (130 aa).

Mg(2+) contacts are provided by D9 and E58.

The protein belongs to the P-Pant transferase superfamily. AcpS family. It depends on Mg(2+) as a cofactor.

The protein resides in the cytoplasm. The catalysed reaction is apo-[ACP] + CoA = holo-[ACP] + adenosine 3',5'-bisphosphate + H(+). Its function is as follows. Transfers the 4'-phosphopantetheine moiety from coenzyme A to a Ser of acyl-carrier-protein. This Mycolicibacterium smegmatis (strain ATCC 700084 / mc(2)155) (Mycobacterium smegmatis) protein is Holo-[acyl-carrier-protein] synthase.